Here is a 799-residue protein sequence, read N- to C-terminus: Elongation factor G, mitochondrial (799 aa).

The N-terminal 33 residues, 1-33, are a transit peptide targeting the mitochondrion; the sequence is MRSPSLARLQTRAVFGLTRSARFQPQTLLRQRC. One can recognise a tr-type G domain in the interval 97–384; sequence DKCRNIGIAA…GVIDYLPNPA (288 aa). GTP is bound by residues 106–113, 182–186, and 236–239; these read AHIDSGKT, DTPGH, and NKMD.

This sequence belongs to the TRAFAC class translation factor GTPase superfamily. Classic translation factor GTPase family. EF-G/EF-2 subfamily.

The protein resides in the mitochondrion. It participates in protein biosynthesis; polypeptide chain elongation. Its function is as follows. Mitochondrial GTPase that catalyzes the GTP-dependent ribosomal translocation step during translation elongation. During this step, the ribosome changes from the pre-translocational (PRE) to the post-translocational (POST) state as the newly formed A-site-bound peptidyl-tRNA and P-site-bound deacylated tRNA move to the P and E sites, respectively. Catalyzes the coordinated movement of the two tRNA molecules, the mRNA and conformational changes in the ribosome. This Penicillium rubens (strain ATCC 28089 / DSM 1075 / NRRL 1951 / Wisconsin 54-1255) (Penicillium chrysogenum) protein is Elongation factor G, mitochondrial (mef1).